A 258-amino-acid polypeptide reads, in one-letter code: Regulatory protein RecX (258 aa).

This sequence belongs to the RecX family.

The protein localises to the cytoplasm. Modulates RecA activity. This Streptococcus thermophilus (strain CNRZ 1066) protein is Regulatory protein RecX.